A 259-amino-acid chain; its full sequence is Proteasome subunit alpha (259 aa).

This sequence belongs to the peptidase T1A family. The 20S proteasome core is composed of 14 alpha and 14 beta subunits that assemble into four stacked heptameric rings, resulting in a barrel-shaped structure. The two inner rings, each composed of seven catalytic beta subunits, are sandwiched by two outer rings, each composed of seven alpha subunits. The catalytic chamber with the active sites is on the inside of the barrel. Has a gated structure, the ends of the cylinder being occluded by the N-termini of the alpha-subunits. Is capped at one or both ends by the proteasome regulatory ATPase, PAN.

It localises to the cytoplasm. With respect to regulation, the formation of the proteasomal ATPase PAN-20S proteasome complex, via the docking of the C-termini of PAN into the intersubunit pockets in the alpha-rings, triggers opening of the gate for substrate entry. Interconversion between the open-gate and close-gate conformations leads to a dynamic regulation of the 20S proteasome proteolysis activity. Its function is as follows. Component of the proteasome core, a large protease complex with broad specificity involved in protein degradation. This Methanococcus vannielii (strain ATCC 35089 / DSM 1224 / JCM 13029 / OCM 148 / SB) protein is Proteasome subunit alpha.